The sequence spans 382 residues: SAT4 family membrane protein (382 aa).

The interval 1–22 (MFGAELVGRETGGQSTDQPYSY) is disordered. An N-linked (GlcNAc...) asparagine glycan is attached at N78. 2 consecutive transmembrane segments (helical) span residues 80-100 (SQIL…LLYL) and 112-132 (YLSI…NFFL). N-linked (GlcNAc...) asparagine glycosylation is present at N147. 3 helical membrane passes run 159–179 (ILVT…LPII), 192–212 (LGIS…IMRL), and 228–248 (WYTE…PTFF). A glycan (N-linked (GlcNAc...) asparagine) is linked at N269.

This sequence belongs to the SAT4 family.

The protein localises to the membrane. The polypeptide is SAT4 family membrane protein (Emericella nidulans (strain FGSC A4 / ATCC 38163 / CBS 112.46 / NRRL 194 / M139) (Aspergillus nidulans)).